The chain runs to 367 residues: Glutamate 5-kinase (367 aa).

Residue K10 participates in ATP binding. Positions 50, 137, and 149 each coordinate substrate. Residues 169–170 (TD) and 211–217 (TGGMSTK) each bind ATP. Positions 275–353 (AGEITVDEGA…QQIDAILGYE (79 aa)) constitute a PUA domain.

It belongs to the glutamate 5-kinase family.

It localises to the cytoplasm. The enzyme catalyses L-glutamate + ATP = L-glutamyl 5-phosphate + ADP. It participates in amino-acid biosynthesis; L-proline biosynthesis; L-glutamate 5-semialdehyde from L-glutamate: step 1/2. In terms of biological role, catalyzes the transfer of a phosphate group to glutamate to form L-glutamate 5-phosphate. The sequence is that of Glutamate 5-kinase from Salmonella agona (strain SL483).